A 333-amino-acid polypeptide reads, in one-letter code: UDP-N-acetylglucosamine 4,6-dehydratase (inverting) (333 aa).

NADP(+)-binding positions include Thr-19 to Phe-22, Ser-43 to Lys-48, Asp-67 to Val-68, Ala-87, Lys-91, and Leu-129 to Ser-130. Lys-91 is a substrate binding site. The active site involves Lys-133. 2 residues coordinate NADP(+): Tyr-141 and Lys-145. Asn-173 serves as a coordination point for substrate. Val-174 to Arg-178 is an NADP(+) binding site. The substrate site is built by Val-181, Thr-199, Arg-258, and Glu-261.

Belongs to the polysaccharide synthase family. In terms of assembly, homohexamer. It depends on NADP(+) as a cofactor.

It carries out the reaction UDP-N-acetyl-alpha-D-glucosamine = UDP-2-acetamido-2,6-dideoxy-beta-L-arabino-hex-4-ulose + H2O. Catalyzes the first step in the biosynthesis of pseudaminic acid, a sialic-acid-like sugar that is used to modify flagellin. Has both C6 dehydratase and C5 epimerase activities that result in the production of both UDP-2-acetamido-2,6-dideoxy-beta-L-arabino-4-hexulose and UDP-2-acetamido-2,6-dideoxy-alpha-D-xylo-4-hexulose. This Helicobacter pylori (strain ATCC 700392 / 26695) (Campylobacter pylori) protein is UDP-N-acetylglucosamine 4,6-dehydratase (inverting) (pseB).